The chain runs to 337 residues: Undecaprenyl-phosphate 4-deoxy-4-formamido-L-arabinose transferase (337 aa).

The next 2 helical transmembrane spans lie at 235–255 and 270–290; these read LSII…LLII and FVLF…MGLL.

The protein belongs to the glycosyltransferase 2 family.

It localises to the cell inner membrane. The enzyme catalyses UDP-4-deoxy-4-formamido-beta-L-arabinose + di-trans,octa-cis-undecaprenyl phosphate = 4-deoxy-4-formamido-alpha-L-arabinopyranosyl di-trans,octa-cis-undecaprenyl phosphate + UDP. The protein operates within glycolipid biosynthesis; 4-amino-4-deoxy-alpha-L-arabinose undecaprenyl phosphate biosynthesis; 4-amino-4-deoxy-alpha-L-arabinose undecaprenyl phosphate from UDP-4-deoxy-4-formamido-beta-L-arabinose and undecaprenyl phosphate: step 1/2. It functions in the pathway bacterial outer membrane biogenesis; lipopolysaccharide biosynthesis. Its function is as follows. Catalyzes the transfer of 4-deoxy-4-formamido-L-arabinose from UDP to undecaprenyl phosphate. The modified arabinose is attached to lipid A and is required for resistance to polymyxin and cationic antimicrobial peptides. This is Undecaprenyl-phosphate 4-deoxy-4-formamido-L-arabinose transferase from Pseudomonas savastanoi pv. phaseolicola (strain 1448A / Race 6) (Pseudomonas syringae pv. phaseolicola (strain 1448A / Race 6)).